We begin with the raw amino-acid sequence, 173 residues long: Catabolic 3-dehydroquinase (173 aa).

Tyrosine 26 functions as the Proton acceptor in the catalytic mechanism. Asparagine 102, histidine 108, and aspartate 115 together coordinate substrate. Histidine 128 acts as the Proton donor in catalysis. Substrate-binding positions include 129–130 and arginine 139; that span reads VS.

Belongs to the type-II 3-dehydroquinase family. As to quaternary structure, homododecamer. Adopts a ring-like structure, composed of an arrangement of two hexameric rings stacked on top of one another.

The enzyme catalyses 3-dehydroquinate = 3-dehydroshikimate + H2O. It participates in aromatic compound metabolism; 3,4-dihydroxybenzoate biosynthesis; 3,4-dihydroxybenzoate from 3-dehydroquinate: step 1/2. Functionally, 3-dehydroquinate dehydratase; part of the qa gene cluster that mediates the catabolism of quinic acid (QA) and as such, allows the use of QA as a sole carbon source. Catalyzes the second reaction in the inducible quinic acid catabolic pathway by converting 3-dehydroquinate into 3-dehydroshikimate. The qa cluster encodes 3 inducible enymes (qa-2, qa-3 and qa-4) catalyzing the first three reactions in the catabolism of quinic acid to protocatechuic acid (also known as 3,4-Dihydroxybenzoic acid). This is Catabolic 3-dehydroquinase from Neurospora crassa (strain ATCC 24698 / 74-OR23-1A / CBS 708.71 / DSM 1257 / FGSC 987).